The chain runs to 1551 residues: Envelopment polyprotein (1551 aa).

Residues 1-17 form the signal peptide; the sequence is MSKRVLIIAVVVYLVFT. Residues 18–546 are Lumenal-facing; the sequence is TQNQITGNHT…CRMSSRPTVA (529 aa). The tract at residues 24–66 is disordered; sequence GNHTTINSSSPSTTEASSTPTVSRTPQTTTTSTAVSTTITATT. N-linked (GlcNAc...) asparagine; by host glycans are attached at residues Asn25 and Asn30. Residues 31-66 show a composition bias toward low complexity; the sequence is SSSPSTTEASSTPTVSRTPQTTTTSTAVSTTITATT. Asn80, Asn142, and Asn413 each carry an N-linked (GlcNAc...) asparagine; by host glycan. Residues 547-567 traverse the membrane as a helical segment; it reads LLLGIWIGCGYILTCIFSFLL. Topologically, residues 568–675 are cytoplasmic; sequence YHLILFFANC…ISVGIFLKRT (108 aa). A helical transmembrane segment spans residues 676-696; sequence TWLVVLLVLLGLAISPVQGAP. Residues 697 to 704 lie on the Lumenal side of the membrane; it reads TEVSNVKQ. Residues 705–725 traverse the membrane as a helical segment; sequence DGDYSICYFIFGCLVTAALLL. Residues 726–823 lie on the Cytoplasmic side of the membrane; it reads KVKRTNSNGI…REKLFTTGLQ (98 aa). The helical transmembrane segment at 824-844 threads the bilayer; that stretch reads LFINKTNVVVFALIMCFLLLL. At 845 to 1451 the chain is on the lumenal side; the sequence is TGHNASAFDS…GDFFKHYIGS (607 aa). N-linked (GlcNAc...) asparagine; by host glycosylation is found at Asn848, Asn1201, Asn1258, and Asn1420. Residues Cys1023 and Cys1216 are joined by a disulfide bond. The helical transmembrane segment at 1452-1472 threads the bilayer; it reads IAVGVLGTVLPFALLILFFIY. Residues 1473-1551 lie on the Cytoplasmic side of the membrane; it reads GDKMLWPFKV…KKEKKLSEIA (79 aa).

It belongs to the nairovirus envelope glycoprotein family. As to quaternary structure, heterodimer with glycoprotein C; in prefusion state. In terms of assembly, heterodimer with glycoprotein N; in prefusion state. Homotrimeric; in postfusion state. Post-translationally, specific enzymatic cleavage by host MBTPS1/S1P/SKI-1 endopeptidase yield glycoprotein N. Specific enzymatic cleavages by host furin-like protease and MBTPS1/S1P endopeptidase yield GP38. Glycosylated.

It localises to the host endoplasmic reticulum membrane. It is found in the virion membrane. Its subcellular location is the host Golgi apparatus membrane. Functionally, glycoprotein N and glycoprotein C interact with each other and are present at the surface of the virion. Glycoprotein N probably locks the Gn-Gc complex in a prefusion state. Glycoprotein N and glycoprotein C are able to attach the virion to host cell receptors. This attachment induces virion internalization predominantly through clathrin-dependent endocytosis. Its function is as follows. Glycoprotein C and glycoprotein N interact with each other and are present at the surface of the virion. The spikes at the surface of the virion are formed by an N-terminal extension of glycoprotein C. Glycoprotein N and glycoprotein C are able to attach the virion to host cell receptors. This attachment induces virion internalization predominantly through clathrin-dependent endocytosis. Class II fusion protein that promotes fusion of viral membrane with host endosomal membrane after endocytosis of the virion. Exposure to potassium is necessary for the conformational change leading to fusion. This Amblyomma variegatum (Tropical bont tick) protein is Envelopment polyprotein (GP).